A 435-amino-acid chain; its full sequence is AP-2 complex subunit mu (435 aa).

In terms of domain architecture, MHD spans 170–434 (RNELFLDVLE…IGRSGIYETR (265 aa)). Lysine 341, lysine 345, and lysine 354 together coordinate a 1,2-diacyl-sn-glycero-3-phospho-(1D-myo-inositol-3,4,5-trisphosphate).

The protein belongs to the adaptor complexes medium subunit family. As to quaternary structure, adaptor protein complex 2 (AP-2) is a heterotetramer composed of two large adaptins (alpha-type subunit and beta-type subunit), a medium adaptin (mu-type subunit) and a small adaptin (sigma-type subunit).

Its subcellular location is the cell membrane. It localises to the membrane. The protein resides in the coated pit. Component of the adaptor complexes which link clathrin to receptors in coated vesicles. Clathrin-associated protein complexes are believed to interact with the cytoplasmic tails of membrane proteins, leading to their selection and concentration. AP50 is a subunit of the plasma membrane adaptor. The complex binds polyphosphoinositide-containing lipids. The polypeptide is AP-2 complex subunit mu (ap2m1) (Xenopus laevis (African clawed frog)).